The primary structure comprises 160 residues: Cyclic pyranopterin monophosphate synthase (160 aa).

Substrate contacts are provided by residues 75 to 77 and 113 to 114; these read LCH and ME. The active site involves Asp128.

The protein belongs to the MoaC family. As to quaternary structure, homohexamer; trimer of dimers.

The enzyme catalyses (8S)-3',8-cyclo-7,8-dihydroguanosine 5'-triphosphate = cyclic pyranopterin phosphate + diphosphate. Its pathway is cofactor biosynthesis; molybdopterin biosynthesis. Its function is as follows. Catalyzes the conversion of (8S)-3',8-cyclo-7,8-dihydroguanosine 5'-triphosphate to cyclic pyranopterin monophosphate (cPMP). The sequence is that of Cyclic pyranopterin monophosphate synthase from Methylobacterium sp. (strain 4-46).